We begin with the raw amino-acid sequence, 430 residues long: Probable FAD-dependent monooxygenase (430 aa).

Residues 1–23 (MGSTSTPPHVLIIGAGITGLALA) form the signal peptide. 9–37 (HVLIIGAGITGLALAQALRKHGVSFAVYE) contacts FAD. 2 N-linked (GlcNAc...) asparagine glycosylation sites follow: Asn-130 and Asn-151. An FAD-binding site is contributed by 307–330 (LEDWPTPPKGSWSNLGGTATLVGD).

The cofactor is FAD.

This is Probable FAD-dependent monooxygenase from Arthroderma benhamiae (strain ATCC MYA-4681 / CBS 112371) (Trichophyton mentagrophytes).